Here is a 149-residue protein sequence, read N- to C-terminus: uncharacterized protein (149 aa).

The region spanning M1–K149 is the N-acetyltransferase domain.

Belongs to the acetyltransferase family.

This is an uncharacterized protein from Bacillus subtilis (strain 168).